A 393-amino-acid chain; its full sequence is tRNA(Met) cytidine acetate ligase (393 aa).

ATP contacts are provided by glycine 81, asparagine 142, and arginine 167.

The protein belongs to the TmcAL family.

It localises to the cytoplasm. The catalysed reaction is cytidine(34) in elongator tRNA(Met) + acetate + ATP = N(4)-acetylcytidine(34) in elongator tRNA(Met) + AMP + diphosphate. Functionally, catalyzes the formation of N(4)-acetylcytidine (ac(4)C) at the wobble position of elongator tRNA(Met), using acetate and ATP as substrates. First activates an acetate ion to form acetyladenylate (Ac-AMP) and then transfers the acetyl group to tRNA to form ac(4)C34. The chain is tRNA(Met) cytidine acetate ligase from Bacillus cytotoxicus (strain DSM 22905 / CIP 110041 / 391-98 / NVH 391-98).